The following is a 363-amino-acid chain: Chorismate synthase (363 aa).

Arg-48 is a binding site for NADP(+). FMN-binding positions include 125-127 (RSS), 238-239 (NA), Gly-278, 293-297 (KPTAS), and Arg-319.

It belongs to the chorismate synthase family. In terms of assembly, homotetramer. FMNH2 serves as cofactor.

The catalysed reaction is 5-O-(1-carboxyvinyl)-3-phosphoshikimate = chorismate + phosphate. The protein operates within metabolic intermediate biosynthesis; chorismate biosynthesis; chorismate from D-erythrose 4-phosphate and phosphoenolpyruvate: step 7/7. In terms of biological role, catalyzes the anti-1,4-elimination of the C-3 phosphate and the C-6 proR hydrogen from 5-enolpyruvylshikimate-3-phosphate (EPSP) to yield chorismate, which is the branch point compound that serves as the starting substrate for the three terminal pathways of aromatic amino acid biosynthesis. This reaction introduces a second double bond into the aromatic ring system. In Acinetobacter baylyi (strain ATCC 33305 / BD413 / ADP1), this protein is Chorismate synthase.